A 379-amino-acid chain; its full sequence is Alkanesulfonate monooxygenase (379 aa).

This sequence belongs to the SsuD family.

The catalysed reaction is an alkanesulfonate + FMNH2 + O2 = an aldehyde + FMN + sulfite + H2O + 2 H(+). Functionally, catalyzes the desulfonation of aliphatic sulfonates. The polypeptide is Alkanesulfonate monooxygenase (Pseudomonas syringae pv. syringae (strain B728a)).